The primary structure comprises 158 residues: Ribonuclease H (158 aa).

The RNase H type-1 domain maps to 9-155 (AFKPVELYTD…CDKLAVAAYQ (147 aa)). Mg(2+) is bound by residues Asp18, Glu58, Asp80, and Asp147.

The protein belongs to the RNase H family. Monomer. Mg(2+) is required as a cofactor.

It localises to the cytoplasm. It carries out the reaction Endonucleolytic cleavage to 5'-phosphomonoester.. In terms of biological role, endonuclease that specifically degrades the RNA of RNA-DNA hybrids. The sequence is that of Ribonuclease H from Rhodopirellula baltica (strain DSM 10527 / NCIMB 13988 / SH1).